A 321-amino-acid polypeptide reads, in one-letter code: Malate dehydrogenase (321 aa).

NAD(+) is bound by residues G10–G15 and D34. Residues R83 and R89 each coordinate substrate. NAD(+) is bound by residues N96 and I119 to N121. Substrate is bound by residues N121 and R152. H176 serves as the catalytic Proton acceptor.

The protein belongs to the LDH/MDH superfamily. MDH type 3 family.

It catalyses the reaction (S)-malate + NAD(+) = oxaloacetate + NADH + H(+). In terms of biological role, catalyzes the reversible oxidation of malate to oxaloacetate. The chain is Malate dehydrogenase from Xanthobacter autotrophicus (strain ATCC BAA-1158 / Py2).